Consider the following 47-residue polypeptide: Mu-theraphotoxin-An1a (47 aa).

3 cysteine pairs are disulfide-bonded: cysteine 4–cysteine 34, cysteine 8–cysteine 39, and cysteine 22–cysteine 44.

Post-translationally, contains 3 disulfide bonds. As to expression, expressed by the venom gland.

It localises to the secreted. Its function is as follows. Is toxic to insects. Reduces amplitude and frequency of spontaneous firing and inhibits voltage-gated sodium current (Nav) in the dorsal unpaired median (DUM) neurons of P.americana. This Acanthoscurria natalensis (Tarantula spider) protein is Mu-theraphotoxin-An1a.